The primary structure comprises 712 residues: Transferrin-binding protein B (712 aa).

Positions 1–20 are cleaved as a signal peptide; sequence MNNPLVNQAAMVLPVFLLSA. Cys21 is lipidated: N-palmitoyl cysteine. A lipid anchor (S-diacylglycerol cysteine) is attached at Cys21. Positions 59-196 are N-terminal handle domain; sequence GGYGFAMRLK…YHGKEPSRQL (138 aa). Disordered stretches follow at residues 78 to 104, 123 to 144, 223 to 256, 309 to 338, 364 to 398, 442 to 495, and 689 to 712; these read EDEV…PKRQ, PYLK…QPKN, IIQP…LTDG, NGKA…SLSG, SAKT…SSEN, ASES…GDTN, and NATN…QPVR. Residues 95-104 show a composition bias toward basic and acidic residues; sequence DEPKELPKRQ. A compositionally biased stretch (polar residues) spans 128-144; sequence SNHQNGNTGNGINQPKN. Positions 197-367 are N-terminal beta barrel domain; that stretch reads PASGKITYKG…KVAVVGSAKT (171 aa). 2 stretches are compositionally biased toward low complexity: residues 372-398 and 446-459; these read ANGN…SSEN and GNNQ…GGTA. The interval 389 to 555 is C-terminal handle domain; that stretch reads NGAAGTSSEN…SMFLQGERTD (167 aa). Positions 462 to 475 are enriched in basic and acidic residues; it reads RKFDHTPESDKKDA. 2 stretches are compositionally biased toward polar residues: residues 477–495 and 689–700; these read AGTQ…GDTN and NATNASGNSSAT. Residues 556 to 712 form a C-terminal beta barrel domain region; the sequence is EKEIPSEQNI…FGAKRQQPVR (157 aa).

It belongs to the TbpB family. Isotype II subfamily. Binds only human holo-transferrin (TF), via the TF C-terminus. Forms a large complex with TF and TbpA. Interacts via its C-terminal domain with Slam1.

The protein resides in the cell outer membrane. It localises to the cell surface. In terms of biological role, neisseria acquires iron by extracting it from serum transferrin (TF) in its human host. Acts as a TF receptor and is required for TF utilization. Involved in the initial capture of TF. Helps select only those TF molecules that can be used as an iron source and concentrates them on the cell surface, maintaining the iron-loaded status of the TF C-terminal lobe until its delivery to TbpA. The protein is Transferrin-binding protein B of Neisseria meningitidis serogroup B (strain ATCC BAA-335 / MC58).